The chain runs to 613 residues: Protein CER1-like 2 (613 aa).

Helical transmembrane passes span 13-33 (WTPL…DSIY), 44-64 (LLIV…ISLS), 95-115 (IIFN…TSTI), 122-142 (GVIL…YWFH), 182-202 (LILG…VVSI), and 322-342 (YLFL…SFSF). Positions 134–268 (VEFIYYWFHR…MPMYDYIYGT (135 aa)) constitute a Fatty acid hydroxylase domain.

Belongs to the sterol desaturase family. As to expression, not detected in any tissues.

The protein localises to the membrane. The sequence is that of Protein CER1-like 2 from Arabidopsis thaliana (Mouse-ear cress).